We begin with the raw amino-acid sequence, 377 residues long: Nitric oxide reductase FlRd-NAD(+) reductase (377 aa).

The protein belongs to the FAD-dependent oxidoreductase family. FAD is required as a cofactor.

Its subcellular location is the cytoplasm. The catalysed reaction is 2 reduced [nitric oxide reductase rubredoxin domain] + NAD(+) + H(+) = 2 oxidized [nitric oxide reductase rubredoxin domain] + NADH. It functions in the pathway nitrogen metabolism; nitric oxide reduction. Functionally, one of at least two accessory proteins for anaerobic nitric oxide (NO) reductase. Reduces the rubredoxin moiety of NO reductase. This is Nitric oxide reductase FlRd-NAD(+) reductase from Escherichia coli (strain SMS-3-5 / SECEC).